Reading from the N-terminus, the 328-residue chain is UPF0194 membrane protein YPTS_1292 (328 aa).

Positions 1–22 (MNRKKIIVAAVIVALLATLAYG) are cleaved as a signal peptide. 2 coiled-coil regions span residues 80-109 (YLNA…REEE) and 142-209 (AVSA…ILLA).

The protein belongs to the UPF0194 family.

Its subcellular location is the periplasm. This is UPF0194 membrane protein YPTS_1292 from Yersinia pseudotuberculosis serotype IB (strain PB1/+).